We begin with the raw amino-acid sequence, 163 residues long: Nucleotide-binding protein Npun_R4736 (163 aa).

The protein belongs to the YajQ family.

Functionally, nucleotide-binding protein. The sequence is that of Nucleotide-binding protein Npun_R4736 from Nostoc punctiforme (strain ATCC 29133 / PCC 73102).